The following is a 1208-amino-acid chain: DNA-directed RNA polymerase subunit beta (1208 aa).

The protein belongs to the RNA polymerase beta chain family. As to quaternary structure, the RNAP catalytic core consists of 2 alpha, 1 beta, 1 beta' and 1 omega subunit. When a sigma factor is associated with the core the holoenzyme is formed, which can initiate transcription.

It carries out the reaction RNA(n) + a ribonucleoside 5'-triphosphate = RNA(n+1) + diphosphate. DNA-dependent RNA polymerase catalyzes the transcription of DNA into RNA using the four ribonucleoside triphosphates as substrates. This Enterococcus faecium (Streptococcus faecium) protein is DNA-directed RNA polymerase subunit beta.